A 647-amino-acid polypeptide reads, in one-letter code: UvrABC system protein C (647 aa).

The GIY-YIG domain maps to 16–95; the sequence is VEPGVYRFRD…IKEFDPRFNV (80 aa). A UVR domain is found at 208 to 243; sequence DRFARELEQQMNAAAAELDFERAARLRDDLGALKRA.

It belongs to the UvrC family. Interacts with UvrB in an incision complex.

It is found in the cytoplasm. The UvrABC repair system catalyzes the recognition and processing of DNA lesions. UvrC both incises the 5' and 3' sides of the lesion. The N-terminal half is responsible for the 3' incision and the C-terminal half is responsible for the 5' incision. This Mycolicibacterium paratuberculosis (strain ATCC BAA-968 / K-10) (Mycobacterium paratuberculosis) protein is UvrABC system protein C.